A 539-amino-acid polypeptide reads, in one-letter code: Phospho-2-dehydro-3-deoxyheptonate aldolase 2, chloroplastic (539 aa).

2 disordered regions span residues 1–23 (MALA…SAPQ) and 41–70 (VHAA…APEK). The transit peptide at 1–54 (MALATNSAAVSGGAAAAASSAPQPRLAATFLPMRRRTVSAVHAADPAKSNGPVQ) directs the protein to the chloroplast. Residues 7 to 21 (SAAVSGGAAAAASSA) are compositionally biased toward low complexity.

The protein belongs to the class-II DAHP synthase family.

It is found in the plastid. The protein resides in the chloroplast. It catalyses the reaction D-erythrose 4-phosphate + phosphoenolpyruvate + H2O = 7-phospho-2-dehydro-3-deoxy-D-arabino-heptonate + phosphate. It participates in metabolic intermediate biosynthesis; chorismate biosynthesis; chorismate from D-erythrose 4-phosphate and phosphoenolpyruvate: step 1/7. The protein is Phospho-2-dehydro-3-deoxyheptonate aldolase 2, chloroplastic (DAHPS2) of Oryza sativa subsp. japonica (Rice).